Reading from the N-terminus, the 339-residue chain is 4-hydroxythreonine-4-phosphate dehydrogenase (339 aa).

Substrate-binding residues include His141 and Thr142. A divalent metal cation-binding residues include His171, His215, and His270. The substrate site is built by Lys278, Asn287, and Arg296.

This sequence belongs to the PdxA family. Homodimer. It depends on Zn(2+) as a cofactor. Requires Mg(2+) as cofactor. Co(2+) serves as cofactor.

The protein resides in the cytoplasm. It catalyses the reaction 4-(phosphooxy)-L-threonine + NAD(+) = 3-amino-2-oxopropyl phosphate + CO2 + NADH. Its pathway is cofactor biosynthesis; pyridoxine 5'-phosphate biosynthesis; pyridoxine 5'-phosphate from D-erythrose 4-phosphate: step 4/5. Catalyzes the NAD(P)-dependent oxidation of 4-(phosphooxy)-L-threonine (HTP) into 2-amino-3-oxo-4-(phosphooxy)butyric acid which spontaneously decarboxylates to form 3-amino-2-oxopropyl phosphate (AHAP). This chain is 4-hydroxythreonine-4-phosphate dehydrogenase, found in Geobacter metallireducens (strain ATCC 53774 / DSM 7210 / GS-15).